Reading from the N-terminus, the 469-residue chain is 3-isopropylmalate dehydratase large subunit (469 aa).

[4Fe-4S] cluster-binding residues include cysteine 347, cysteine 408, and cysteine 411.

Belongs to the aconitase/IPM isomerase family. LeuC type 1 subfamily. Heterodimer of LeuC and LeuD. Requires [4Fe-4S] cluster as cofactor.

It carries out the reaction (2R,3S)-3-isopropylmalate = (2S)-2-isopropylmalate. It functions in the pathway amino-acid biosynthesis; L-leucine biosynthesis; L-leucine from 3-methyl-2-oxobutanoate: step 2/4. In terms of biological role, catalyzes the isomerization between 2-isopropylmalate and 3-isopropylmalate, via the formation of 2-isopropylmaleate. In Actinobacillus pleuropneumoniae serotype 3 (strain JL03), this protein is 3-isopropylmalate dehydratase large subunit.